The sequence spans 282 residues: 2-dehydro-3-deoxyphosphooctonate aldolase (282 aa).

Belongs to the KdsA family.

Its subcellular location is the cytoplasm. The enzyme catalyses D-arabinose 5-phosphate + phosphoenolpyruvate + H2O = 3-deoxy-alpha-D-manno-2-octulosonate-8-phosphate + phosphate. Its pathway is carbohydrate biosynthesis; 3-deoxy-D-manno-octulosonate biosynthesis; 3-deoxy-D-manno-octulosonate from D-ribulose 5-phosphate: step 2/3. It functions in the pathway bacterial outer membrane biogenesis; lipopolysaccharide biosynthesis. This is 2-dehydro-3-deoxyphosphooctonate aldolase from Shewanella woodyi (strain ATCC 51908 / MS32).